We begin with the raw amino-acid sequence, 162 residues long: UPF0262 protein AZC_3148 (162 aa).

Belongs to the UPF0262 family.

This chain is UPF0262 protein AZC_3148, found in Azorhizobium caulinodans (strain ATCC 43989 / DSM 5975 / JCM 20966 / LMG 6465 / NBRC 14845 / NCIMB 13405 / ORS 571).